The chain runs to 2531 residues: Neurogenic locus notch homolog protein 1 (2531 aa).

Residues 1 to 18 (MPRLLAPLLCLTLLPALA) form the signal peptide. The Extracellular portion of the chain corresponds to 19 to 1725 (ARGLRCSQPS…VEPPLPSQLH (1707 aa)). EGF-like domains lie at 20–58 (RGLR…QRCQ), 59–99 (DPSP…PLCL), 102–139 (LANA…KSCQ), and 140–176 (QADP…PTCR). 33 cysteine pairs are disulfide-bonded: Cys-24–Cys-37, Cys-31–Cys-46, Cys-48–Cys-57, Cys-63–Cys-74, Cys-68–Cys-87, Cys-89–Cys-98, Cys-106–Cys-117, Cys-111–Cys-127, Cys-129–Cys-138, Cys-144–Cys-155, Cys-149–Cys-164, Cys-166–Cys-175, Cys-182–Cys-195, Cys-189–Cys-204, Cys-206–Cys-215, Cys-222–Cys-233, Cys-227–Cys-243, Cys-245–Cys-254, Cys-261–Cys-272, Cys-266–Cys-281, Cys-283–Cys-292, Cys-299–Cys-312, Cys-306–Cys-321, Cys-323–Cys-332, Cys-339–Cys-350, Cys-344–Cys-359, Cys-361–Cys-370, Cys-376–Cys-387, Cys-381–Cys-398, Cys-400–Cys-409, Cys-416–Cys-429, Cys-423–Cys-438, and Cys-440–Cys-449. A glycan (N-linked (GlcNAc...) asparagine) is linked at Asn-41. O-linked (Glc...) serine glycosylation is present at Ser-65. Thr-73 is a glycosylation site (O-linked (Fuc...) threonine). Thr-116 carries O-linked (Fuc...) threonine glycosylation. An O-linked (Glc...) serine glycan is attached at Ser-146. Positions 178-216 (DVNECSQNPGLCRHGGTCHNEIGSYRCACRATHTGPHCE) constitute an EGF-like 5; calcium-binding domain. An O-linked (Fuc...) threonine glycan is attached at Thr-194. The 38-residue stretch at 218-255 (PYVPCSPSPCQNGGTCRPTGDTTHECACLPGFAGQNCE) folds into the EGF-like 6 domain. An O-linked (Fuc...) threonine; alternate glycan is attached at Thr-232. Residue Thr-232 is glycosylated (O-linked (GalNAc...) threonine; alternate). One can recognise an EGF-like 7; calcium-binding domain in the interval 257-293 (NVDDCPGNNCKNGGACVDGVNTYNCRCPPEWTGQYCT). Positions 295–333 (DVDECQLMPNACQNGGTCHNSHGGYNCVCVNGWTGEDCS) constitute an EGF-like 8; calcium-binding domain. A glycan (O-linked (Fuc...) threonine) is linked at Thr-311. Residues 335 to 371 (NIDDCASAACFQGATCHDRVASFYCECPHGRTGLLCH) form the EGF-like 9; calcium-binding domain. Ser-341 is a glycosylation site (O-linked (Glc...) serine). O-linked (Fuc...) threonine glycosylation occurs at Thr-349. One can recognise an EGF-like 10 domain in the interval 372–410 (LNDACISNPCNEGSNCDTNPVNGKAICTCPSGYTGPACS). O-linked (Glc...) serine glycosylation is present at Ser-378. Residues 412 to 450 (DVDECALGANPCEHAGKCLNTLGSFECQCLQGYTGPRCE) enclose the EGF-like 11; calcium-binding domain. The interval 420-421 (AN) is interaction with DLL4. 2 residues coordinate Ca(2+): Thr-432 and Ser-435. O-linked (Glc...) serine glycosylation occurs at Ser-435. An interaction with DLL4 region spans residues 448 to 452 (RCEID). Asp-452, Val-453, and Glu-455 together coordinate Ca(2+). The region spanning 452-488 (DVNECISNPCQNDATCLDQIGEFQCICMPGYEGVYCE) is the EGF-like 12; calcium-binding domain. 3 disulfide bridges follow: Cys-456/Cys-467, Cys-461/Cys-476, and Cys-478/Cys-487. O-linked (Glc...) serine glycosylation occurs at Ser-458. Thr-466 carries an O-linked (Fuc...) threonine glycan. Positions 469 and 470 each coordinate Ca(2+). Positions 490, 491, and 493 each coordinate Ca(2+). The 37-residue stretch at 490–526 (NTDECASSPCLHNGRCVDKINEFLCQCPKGFSGHLCQ) folds into the EGF-like 13; calcium-binding domain. 75 disulfide bridges follow: Cys-494/Cys-505, Cys-499/Cys-514, Cys-516/Cys-525, Cys-532/Cys-543, Cys-537/Cys-552, Cys-554/Cys-563, Cys-570/Cys-580, Cys-575/Cys-589, Cys-591/Cys-600, Cys-607/Cys-618, Cys-612/Cys-627, Cys-629/Cys-638, Cys-645/Cys-655, Cys-650/Cys-664, Cys-666/Cys-675, Cys-682/Cys-693, Cys-687/Cys-702, Cys-704/Cys-713, Cys-720/Cys-730, Cys-725/Cys-739, Cys-741/Cys-750, Cys-757/Cys-768, Cys-762/Cys-777, Cys-779/Cys-788, Cys-795/Cys-806, Cys-800/Cys-815, Cys-817/Cys-826, Cys-833/Cys-844, Cys-838/Cys-855, Cys-857/Cys-866, Cys-873/Cys-884, Cys-878/Cys-893, Cys-895/Cys-904, Cys-911/Cys-922, Cys-916/Cys-931, Cys-933/Cys-942, Cys-949/Cys-960, Cys-954/Cys-969, Cys-971/Cys-980, Cys-987/Cys-998, Cys-992/Cys-1007, Cys-1009/Cys-1018, Cys-1025/Cys-1036, Cys-1030/Cys-1045, Cys-1047/Cys-1056, Cys-1063/Cys-1074, Cys-1068/Cys-1083, Cys-1085/Cys-1094, Cys-1101/Cys-1122, Cys-1116/Cys-1131, Cys-1133/Cys-1142, Cys-1149/Cys-1160, Cys-1154/Cys-1169, Cys-1171/Cys-1180, Cys-1187/Cys-1198, Cys-1192/Cys-1207, Cys-1209/Cys-1218, Cys-1225/Cys-1244, Cys-1238/Cys-1253, Cys-1255/Cys-1264, Cys-1271/Cys-1284, Cys-1276/Cys-1293, Cys-1295/Cys-1304, Cys-1311/Cys-1322, Cys-1316/Cys-1334, Cys-1336/Cys-1345, Cys-1352/Cys-1363, Cys-1357/Cys-1372, Cys-1374/Cys-1383, Cys-1391/Cys-1403, Cys-1397/Cys-1414, Cys-1416/Cys-1425, Cys-1449/Cys-1472, Cys-1454/Cys-1467, and Cys-1463/Cys-1479. O-linked (Glc...) serine glycosylation occurs at Ser-496. Ca(2+)-binding residues include Asp-507 and Lys-508. The EGF-like 14; calcium-binding domain occupies 528–564 (DVDECASTPCKNGAKCLDGPNTYTCVCTEGYTGTHCE). Residue Ser-534 is glycosylated (O-linked (Glc...) serine). The EGF-like 15; calcium-binding domain maps to 566–601 (DIDECDPDPCHYGLCKDGVATFTCLCQPGYTGHHCE). The 37-residue stretch at 603 to 639 (NINECHSQPCRHGGTCQDRDNYYLCLCLKGTTGPNCE) folds into the EGF-like 16; calcium-binding domain. The O-linked (Glc...) serine glycan is linked to Ser-609. Thr-617 carries an O-linked (Fuc...) threonine glycan. The EGF-like 17; calcium-binding domain maps to 641–676 (NLDDCASNPCDSGTCLDKIDGYECACEPGYTGSMCN). O-linked (Glc...) serine glycosylation is present at Ser-647. One can recognise an EGF-like 18; calcium-binding domain in the interval 678-714 (NIDECAGSPCHNGGTCEDGIAGFTCRCPEGYHDPTCL). A glycan (O-linked (Fuc...) threonine) is linked at Thr-692. The region spanning 716–751 (EVNECNSNPCIHGACRDGLNGYKCDCAPGWSGTNCD) is the EGF-like 19; calcium-binding domain. A glycan (O-linked (Glc...) serine) is linked at Ser-722. An EGF-like 20; calcium-binding domain is found at 753–789 (NNNECESNPCVNGGTCKDMTSGYVCTCREGFSGPNCQ). O-linked (Glc...) serine glycosylation is present at Ser-759. A glycan (O-linked (Fuc...) threonine) is linked at Thr-767. O-linked (GlcNAc) serine glycosylation occurs at Ser-784. Positions 791-827 (NINECASNPCLNQGTCIDDVAGYKCNCPLPYTGATCE) constitute an EGF-like 21; calcium-binding domain. O-linked (Glc...) serine glycosylation is present at Ser-797. Thr-805 carries an O-linked (Fuc...) threonine glycan. Residues 829 to 867 (VLAPCATSPCKNSGVCKESEDYESFSCVCPTGWQGQTCE) enclose the EGF-like 22 domain. An EGF-like 23; calcium-binding domain is found at 869–905 (DINECVKSPCRHGASCQNTNGSYRCLCQAGYTGRNCE). N-linked (GlcNAc...) asparagine glycosylation occurs at Asn-888. O-linked (GlcNAc) threonine glycosylation occurs at Thr-900. An EGF-like 24 domain is found at 907–943 (DIDDCRPNPCHNGGSCTDGVNAAFCDCLPGFQGAFCE). O-linked (Fuc) serine glycosylation occurs at Ser-921. The 37-residue stretch at 945 to 981 (DINECASNPCQNGANCTDCVDSYTCTCPTGFNGIHCE) folds into the EGF-like 25; calcium-binding domain. A glycan (O-linked (Glc...) serine) is linked at Ser-951. An N-linked (GlcNAc...) asparagine glycan is attached at Asn-959. Residues 983 to 1019 (NTPDCTESSCFNGGTCVDGINSFTCLCPPGFTGSYCQ) form the EGF-like 26 domain. An O-linked (Fuc...) threonine glycan is attached at Thr-997. In terms of domain architecture, EGF-like 27; calcium-binding spans 1021-1057 (DVNECDSRPCLHGGTCQDSYGTYKCTCPQGYTGLNCQ). Ser-1027 carries O-linked (Glc...) serine glycosylation. A glycan (O-linked (Fuc...) threonine) is linked at Thr-1035. 2 EGF-like domains span residues 1059-1095 (LVRW…FNCD) and 1097-1143 (LSVS…SYCE). The O-linked (Glc...) serine glycan is linked to Ser-1065. The EGF-like 30; calcium-binding domain maps to 1145-1181 (EVDECSPNPCQNGATCTDYLGGFSCKCVAGYHGSNCS). Thr-1159 is a glycosylation site (O-linked (Fuc...) threonine). An N-linked (GlcNAc...) asparagine glycan is attached at Asn-1179. The EGF-like 31; calcium-binding domain occupies 1183–1219 (EINECLSQPCQNGGTCIDLTNTYKCSCPRGTQGVHCE). Ser-1189 is a glycosylation site (O-linked (Glc...) serine). Residue Thr-1197 is glycosylated (O-linked (Fuc...) threonine). The EGF-like 32; calcium-binding domain occupies 1221-1265 (NVDDCHPPLDPASRSPKCFNNGTCVDQVGGYTCTCPPGFVGERCE). N-linked (GlcNAc...) asparagine glycosylation occurs at Asn-1241. EGF-like domains lie at 1267–1305 (DVNE…RRCE), 1307–1346 (VING…ATCE), 1348–1384 (DART…PECQ), and 1387–1426 (ASSP…LLCH). O-linked (Glc...) serine glycosylation occurs at Ser-1273. Residue Thr-1362 is glycosylated (O-linked (Fuc...) threonine). Thr-1379 carries an O-linked (GlcNAc...) threonine glycan. Residue Thr-1402 is glycosylated (O-linked (Fuc...) threonine; alternate). Thr-1402 carries an O-linked (GalNAc...) threonine; alternate glycan. 3 LNR repeats span residues 1449 to 1489 (CELP…PWKN), 1490 to 1531 (CTQS…CNPL), and 1532 to 1571 (YDQY…RLAA). Positions 1457, 1460, 1475, and 1478 each coordinate Ca(2+). Asn-1489 carries an N-linked (GlcNAc...) asparagine glycan. 5 cysteine pairs are disulfide-bonded: Cys-1490–Cys-1514, Cys-1496–Cys-1509, Cys-1505–Cys-1521, Cys-1536–Cys-1549, and Cys-1545–Cys-1561. Asn-1587 is a glycosylation site (N-linked (GlcNAc...) asparagine). A glycan (O-linked (GalNAc...) threonine) is linked at Thr-1715. Residues 1718–1750 (PPLPSQLHLMYVAAAAFVLLFFVGCGVLLSRKR) are interaction with PSEN1. Residues 1726–1746 (LMYVAAAAFVLLFFVGCGVLL) form a helical membrane-spanning segment. Topologically, residues 1747–2531 (SRKRRRQHGQ…QITHIPEAFK (785 aa)) are cytoplasmic. Residue Lys-1749 forms a Glycyl lysine isopeptide (Lys-Gly) (interchain with G-Cter in ubiquitin) linkage. The tract at residues 1770 to 1798 (KKKRREPLGEDSVGLKPLKNASDGALMDD) is disordered. Thr-1851 bears the Phosphothreonine mark. ANK repeat units follow at residues 1917-1946 (TGET…DANI), 1950-1980 (MGRT…DLDA), 1984-2013 (DGTT…DVNA), 2017-2046 (LGKS…NKDM), and 2050-2079 (KEET…NRDI). The tract at residues 1937 to 1945 (LLEASADAN) is HIF1AN-binding. At Asn-1945 the chain carries (3S)-3-hydroxyasparagine; by HIF1AN. Residues 2004–2012 (LINSHADVN) are HIF1AN-binding. Asn-2012 is modified ((3S)-3-hydroxyasparagine; by HIF1AN). Disordered regions lie at residues 2141–2185 (SATQ…DSSS), 2382–2428 (QPQN…SLPV), and 2440–2531 (PTSL…EAFK). Over residues 2382 to 2395 (QPQNLQPPSQPHLS) the composition is skewed to low complexity. The span at 2440-2478 (PTSLPSSMVPPMTTTQFLTPPSQHSYSSSPVDNTPSHQL) shows a compositional bias: polar residues. The segment covering 2488 to 2503 (PSPESPDQWSSSSPHS) has biased composition (low complexity). The span at 2504-2524 (NISDWSEGISSPPTSMPSQIT) shows a compositional bias: polar residues.

This sequence belongs to the NOTCH family. Heterodimer of a C-terminal fragment N(TM) and an N-terminal fragment N(EC) which are probably linked by disulfide bonds. Interacts with DNER, DTX1, DTX2 and RBPJ/RBPSUH. Also interacts with MAML1, MAML2 and MAML3 which act as transcriptional coactivators for NOTCH1. Notch 1 intracellular domain interacts with SNW1; the interaction involves multimerized NOTCH1 NICD and is implicated in a formation of an intermediate preactivation complex which associates with DNA-bound CBF-1/RBPJ. The activated membrane-bound form interacts with AAK1 which promotes NOTCH1 stabilization. Forms a trimeric complex with FBXW7 and SGK1. Interacts with HIF1AN. HIF1AN negatively regulates the function of notch intracellular domain (NICD), accelerating myogenic differentiation. Interacts (via NICD) with SNAI1 (via zinc fingers); the interaction induces SNAI1 degradation via MDM2-mediated ubiquitination and inhibits SNAI1-induced cell invasion. Interacts (via NICD) with MDM2A. Interacts (via NICD) with BCL6; the interaction decreases MAML1 recruitment by NOTCH1 NICD on target genes DNA and inhibits NOTCH1 transactivation activity. Interacts with THBS4. Interacts (via the EGF-like repeat region) with CCN3 (via CTCK domain). Interacts (via EGF-like domains) with DLL4 (via N-terminal DSL and MNNL domains). Interacts with ZMIZ1. Interacts (via NICD domain) with MEGF10 (via the cytoplasmic domain). Interacts with DLL1 and JAG1. Interacts (via NICD domain) with PRAG1. Forms a complex with PRAG1, N1ICD and MAML1, in a MAML1-dependent manner. Interacts (via transmembrane region) with PSEN1; the interaction is direct. Interacts with ZFP64. Post-translationally, synthesized in the endoplasmic reticulum as an inactive form which is proteolytically cleaved by a furin-like convertase in the trans-Golgi network before it reaches the plasma membrane to yield an active, ligand-accessible form. Cleavage results in a C-terminal fragment N(TM) and a N-terminal fragment N(EC). Following ligand binding, it is cleaved by ADAM17 to yield a membrane-associated intermediate fragment called notch extracellular truncation (NEXT). Following endocytosis, this fragment is then cleaved by one of the catalytic subunits of gamma-secretase (PSEN1 or PSEN2) to release a Notch-derived peptide containing the intracellular domain (NICD) from the membrane. Phosphorylated. In terms of processing, O-glycosylated on the EGF-like domains. O-glucosylated at Ser-435 by KDELC1 and KDELC2. Contains both O-linked fucose and O-linked glucose in the EGF-like domains 11, 12 and 13, which are interacting with the residues on DLL4. O-linked glycosylation by GALNT11 is involved in determination of left/right symmetry: glycosylation promotes activation of NOTCH1, possibly by promoting cleavage by ADAM17, modulating the balance between motile and immotile (sensory) cilia at the left-right organiser (LRO). MFNG-, RFNG- and LFNG-mediated modification of O-fucose residues at specific EGF-like domains results in inhibition of its activation by JAG1 and enhancement of its activation by DLL1 via an increased binding to DLL1. Post-translationally, ubiquitinated. Undergoes 'Lys-29'-linked polyubiquitination by ITCH; promotes the lysosomal degradation of non-activated internalized NOTCH1. Deubiquitination by USP12 is required for transport of internalized non-activated receptor from late endosomes to lysosomes for degradation. Monoubiquitination at Lys-1749 is required for activation by gamma-secretase cleavage, it promotes interaction with AAK1, which stabilizes it. Deubiquitination by EIF3F is necessary for nuclear import of activated Notch. Hydroxylated at Asn-1945 and Asn-2012 by HIF1AN. Hydroxylation reduces affinity for HI1AN and may thus indirectly modulate negative regulation of NICD. As to expression, expressed in the brain, kidney and spleen. Expressed in postnatal central nervous system (CNS) germinal zones and, in early postnatal life, within numerous cells throughout the CNS. Found in both subventricular and ventricular germinal zones.

It localises to the cell membrane. It is found in the late endosome membrane. The protein localises to the nucleus. Functionally, functions as a receptor for membrane-bound ligands Jagged-1 (JAG1), Jagged-2 (JAG2) and Delta-1 (DLL1) to regulate cell-fate determination. Upon ligand activation through the released notch intracellular domain (NICD) it forms a transcriptional activator complex with RBPJ/RBPSUH and activates genes of the enhancer of split locus. Affects the implementation of differentiation, proliferation and apoptotic programs. Involved in angiogenesis; negatively regulates endothelial cell proliferation and migration and angiogenic sprouting. Involved in the maturation of both CD4(+) and CD8(+) cells in the thymus. Important for follicular differentiation and possibly cell fate selection within the follicle. During cerebellar development, functions as a receptor for neuronal DNER and is involved in the differentiation of Bergmann glia. Represses neuronal and myogenic differentiation. May play an essential role in postimplantation development, probably in some aspect of cell specification and/or differentiation. May be involved in mesoderm development, somite formation and neurogenesis. May enhance HIF1A function by sequestering HIF1AN away from HIF1A. Required for the THBS4 function in regulating protective astrogenesis from the subventricular zone (SVZ) niche after injury. Involved in determination of left/right symmetry by modulating the balance between motile and immotile (sensory) cilia at the left-right organiser (LRO). The polypeptide is Neurogenic locus notch homolog protein 1 (Notch1) (Rattus norvegicus (Rat)).